The sequence spans 415 residues: ATP-dependent Clp protease ATP-binding subunit ClpX (415 aa).

A ClpX-type ZB domain is found at 1 to 53 (MLRSKGDLVLGCSFCGKKEDERRRIVTGHGVSICNYCVERCAEYLRDRKPSAL). 4 residues coordinate Zn(2+): Cys-12, Cys-15, Cys-34, and Cys-37. 118–125 (PTGSGKTL) contributes to the ATP binding site.

Belongs to the ClpX chaperone family. As to quaternary structure, component of the ClpX-ClpP complex. Forms a hexameric ring that, in the presence of ATP, binds to fourteen ClpP subunits assembled into a disk-like structure with a central cavity, resembling the structure of eukaryotic proteasomes.

In terms of biological role, ATP-dependent specificity component of the Clp protease. It directs the protease to specific substrates. Can perform chaperone functions in the absence of ClpP. The polypeptide is ATP-dependent Clp protease ATP-binding subunit ClpX (Treponema pallidum (strain Nichols)).